The sequence spans 350 residues: UBX domain-containing protein 2B (350 aa).

Residues M1–G29 show a composition bias toward acidic residues. Residues M1 to R46 form a disordered region. The segment covering G32 to L45 has biased composition (basic and acidic residues). The 66-residue stretch at E160–I225 folds into the SEP domain. The UBX domain occupies E271–R348.

The protein belongs to the NSFL1C family.

The protein localises to the nucleus. It is found in the cytoplasm. The protein resides in the cytosol. It localises to the endoplasmic reticulum. Its subcellular location is the golgi apparatus. The protein localises to the cytoskeleton. It is found in the microtubule organizing center. The protein resides in the centrosome. In terms of biological role, adapter protein required for Golgi and endoplasmic reticulum biogenesis. Involved in Golgi and endoplasmic reticulum maintenance during interphase and in their reassembly at the end of mitosis. Regulates the centrosomal levels of kinase aurka-a/Aurora A during mitotic progression by promoting aurka-a removal from centrosomes in prophase. Also, regulates spindle orientation during mitosis. The protein is UBX domain-containing protein 2B (ubxn2b) of Xenopus laevis (African clawed frog).